The chain runs to 120 residues: NAD(P)H-quinone oxidoreductase subunit 3, chloroplastic (120 aa).

Transmembrane regions (helical) follow at residues 9–29, 64–84, and 88–108; these read IFWAFLIISSIIPILAFLISG, MFALVFVVFDVETVFLYPWAM, and VLGVSVFIEALIFVLIPIVGL.

The protein belongs to the complex I subunit 3 family. In terms of assembly, NDH is composed of at least 16 different subunits, 5 of which are encoded in the nucleus.

The protein localises to the plastid. The protein resides in the chloroplast thylakoid membrane. It catalyses the reaction a plastoquinone + NADH + (n+1) H(+)(in) = a plastoquinol + NAD(+) + n H(+)(out). It carries out the reaction a plastoquinone + NADPH + (n+1) H(+)(in) = a plastoquinol + NADP(+) + n H(+)(out). Functionally, NDH shuttles electrons from NAD(P)H:plastoquinone, via FMN and iron-sulfur (Fe-S) centers, to quinones in the photosynthetic chain and possibly in a chloroplast respiratory chain. The immediate electron acceptor for the enzyme in this species is believed to be plastoquinone. Couples the redox reaction to proton translocation, and thus conserves the redox energy in a proton gradient. The sequence is that of NAD(P)H-quinone oxidoreductase subunit 3, chloroplastic from Ceratophyllum demersum (Rigid hornwort).